The primary structure comprises 439 residues: Actin-related protein 3 (439 aa).

Positions 40 to 71 (PSAGTGGSGSGRPAVANKPSFLTGGAGPGGHL) are disordered.

It belongs to the actin family. ARP3 subfamily. In terms of assembly, component of the Arp2/3 complex composed.

The protein localises to the cytoplasm. It is found in the cytoskeleton. Functions as ATP-binding component of the Arp2/3 complex which is involved in regulation of actin polymerization and together with an activating nucleation-promoting factor (NPF) mediates the formation of branched actin networks. Seems to contact the pointed end of the daughter actin filament. This chain is Actin-related protein 3 (arp-3), found in Neurospora crassa (strain ATCC 24698 / 74-OR23-1A / CBS 708.71 / DSM 1257 / FGSC 987).